The primary structure comprises 405 residues: uncharacterized protein (405 aa).

The next 12 membrane-spanning stretches (helical) occupy residues I3–E23, G42–L62, P73–V93, I95–I115, S135–I155, Y162–L182, I209–I229, K248–I268, G280–L300, L309–I329, T346–V366, and F377–V397.

This sequence belongs to the major facilitator superfamily. Bcr/CmlA family.

The protein localises to the cell inner membrane. This is an uncharacterized protein from Rickettsia felis (strain ATCC VR-1525 / URRWXCal2) (Rickettsia azadi).